We begin with the raw amino-acid sequence, 342 residues long: GTPase Obg (342 aa).

One can recognise an Obg domain in the interval 1-159 (MKFLDLCKVY…RTIWLRLKLI (159 aa)). An OBG-type G domain is found at 160–327 (ADAGLLGLPN…VLRALWAEID (168 aa)). Residues 166-173 (GLPNAGKS), 191-195 (FTTLV), 212-215 (DIPG), 279-282 (NKID), and 308-310 (SGV) each bind GTP. Mg(2+) is bound by residues serine 173 and threonine 193.

The protein belongs to the TRAFAC class OBG-HflX-like GTPase superfamily. OBG GTPase family. As to quaternary structure, monomer. Mg(2+) serves as cofactor.

The protein localises to the cytoplasm. Its function is as follows. An essential GTPase which binds GTP, GDP and possibly (p)ppGpp with moderate affinity, with high nucleotide exchange rates and a fairly low GTP hydrolysis rate. Plays a role in control of the cell cycle, stress response, ribosome biogenesis and in those bacteria that undergo differentiation, in morphogenesis control. The sequence is that of GTPase Obg from Cereibacter sphaeroides (strain ATCC 17029 / ATH 2.4.9) (Rhodobacter sphaeroides).